Here is a 38-residue protein sequence, read N- to C-terminus: Photosystem II reaction center protein Y (38 aa).

A helical transmembrane segment spans residues 2-20; sequence ILIVLLPILLAATWAFINI.

The protein belongs to the PsbY family. As to quaternary structure, PSII is composed of 1 copy each of membrane proteins PsbA, PsbB, PsbC, PsbD, PsbE, PsbF, PsbH, PsbI, PsbJ, PsbK, PsbL, PsbM, PsbT, PsbX, PsbY, Psb30/Ycf12, peripheral proteins PsbO, CyanoQ (PsbQ), PsbU, PsbV and a large number of cofactors. It forms dimeric complexes.

It localises to the cellular thylakoid membrane. Functionally, loosely associated component of the core of photosystem II (PSII), it is not always seen in crystals. PSII is a light-driven water plastoquinone oxidoreductase, using light energy to abstract electrons from H(2)O, generating a proton gradient subsequently used for ATP formation. This Prochlorococcus marinus (strain MIT 9313) protein is Photosystem II reaction center protein Y.